Here is a 376-residue protein sequence, read N- to C-terminus: N-acetyldiaminopimelate deacetylase (376 aa).

The active site involves D69. The active-site Proton acceptor is E128.

It belongs to the peptidase M20A family. N-acetyldiaminopimelate deacetylase subfamily.

The enzyme catalyses N-acetyl-(2S,6S)-2,6-diaminopimelate + H2O = (2S,6S)-2,6-diaminopimelate + acetate. The protein operates within amino-acid biosynthesis; L-lysine biosynthesis via DAP pathway; LL-2,6-diaminopimelate from (S)-tetrahydrodipicolinate (acetylase route): step 3/3. In terms of biological role, catalyzes the conversion of N-acetyl-diaminopimelate to diaminopimelate and acetate. This chain is N-acetyldiaminopimelate deacetylase, found in Bacillus cereus (strain G9842).